A 24-amino-acid polypeptide reads, in one-letter code: Coenzyme PQQ synthesis protein A (24 aa).

Residues 16-20 (EITMY) constitute a cross-link (pyrroloquinoline quinone (Glu-Tyr)).

This sequence belongs to the PqqA family.

The protein operates within cofactor biosynthesis; pyrroloquinoline quinone biosynthesis. In terms of biological role, required for coenzyme pyrroloquinoline quinone (PQQ) biosynthesis. PQQ is probably formed by cross-linking a specific glutamate to a specific tyrosine residue and excising these residues from the peptide. The polypeptide is Coenzyme PQQ synthesis protein A (Cupriavidus taiwanensis (strain DSM 17343 / BCRC 17206 / CCUG 44338 / CIP 107171 / LMG 19424 / R1) (Ralstonia taiwanensis (strain LMG 19424))).